Consider the following 457-residue polypeptide: MATGKIVQIIGAVIDVEFPQDAVPKVYDALKVETGLTLEVQQQLGGGVVRCIALGTSDGLKRGLKVENTNKAIEVPVGTKTLGRIMNVLGEPIDEAGPIGEEERWTIHRAAPSYEEQANSTELLETGIKVIDLIAPFAKGGKVGLFGGAGVGKTVNMMELIRNIAIEHSGYSVFAGVGERTREGNDFYHEMKDSNVLDKVSLVYGQMNEPPGNRLRVALTGLTMAEKFRDEGRDVLFFVDNIYRYTLAGTEVSALLGRMPSAVGYQPTLAEEMGVLQERITSTKTGSITSVQAVYVPADDLTDPSPATTFAHLDSTVVLSRNIASLGIYPAIDPLDSTSRQLDPLVVGQEHYDVARGVQKTLQRYKELKDIIAILGMDELSEDDKLVVARARKIERFLSQPFHVAEVFNSVPGKFVPLKETIRGFKGILAGEYDHIPEQAFYMAGSIDEVVERANKM.

An ATP-binding site is contributed by 147 to 154 (GGAGVGKT).

Belongs to the ATPase alpha/beta chains family. In terms of assembly, F-type ATPases have 2 components, CF(1) - the catalytic core - and CF(0) - the membrane proton channel. CF(1) has five subunits: alpha(3), beta(3), gamma(1), delta(1), epsilon(1). CF(0) has three main subunits: a(1), b(2) and c(9-12). The alpha and beta chains form an alternating ring which encloses part of the gamma chain. CF(1) is attached to CF(0) by a central stalk formed by the gamma and epsilon chains, while a peripheral stalk is formed by the delta and b chains.

The protein resides in the cell inner membrane. The enzyme catalyses ATP + H2O + 4 H(+)(in) = ADP + phosphate + 5 H(+)(out). Produces ATP from ADP in the presence of a proton gradient across the membrane. The catalytic sites are hosted primarily by the beta subunits. This chain is ATP synthase subunit beta, found in Glaesserella parasuis serovar 5 (strain SH0165) (Haemophilus parasuis).